The primary structure comprises 520 residues: MPGSLPLNAEACWPKDVGIVALEIYFPSQYVDQAELEKYDGVDAGKYTIGLGQAKMGFCTDREDINSLCMTVVQNLMERNNLSYDCIGRLEVGTETIIDKSKSVKTNLMQLFEESGNTDIEGIDTTNACYGGTAAVFNAVNWIESSSWDGRYALVVAGDIAVYATGNARPTGGVGAVALLIGPNAPLIFERGLRGTHMQHAYDFYKPDMLSEYPIVDGKLSIQCYLSALDRCYSVYCKKIHAQWQKEGNDKDFTLNDFGFMIFHSPYCKLVQKSLARMLLNDFLNDQNRDKNSIYSGLEAFGDVKLEDTYFDRDVEKAFMKASSELFSQKTKASLLVSNQNGNMYTSSVYGSLASVLAQYSPQQLAGKRIGVFSYGSGLAATLYSLKVTQDATPGSALDKITASLCDLKSRLDSRTGVAPDVFAENMKLREDTHHLVNYIPQGSIDSLFEGTWYLVRVDEKHRRTYARRPTPNDDTLDEGVGLVHSNIATEHIPSPAKKVPRLPATAAEPEAAVISNGEH.

At serine 4 the chain carries Phosphoserine. Residues aspartate 43 and alanine 44 each coordinate (3S)-3-hydroxy-3-methylglutaryl-CoA. Alanine 44–lysine 46 contacts CoA. N6-acetyllysine is present on lysine 46. Catalysis depends on glutamate 95, which acts as the Proton donor/acceptor. 5 residues coordinate (3S)-3-hydroxy-3-methylglutaryl-CoA: cysteine 129, asparagine 167, threonine 171, serine 221, and histidine 264. Cysteine 129 acts as the Acyl-thioester intermediate in catalysis. Asparagine 167 contributes to the CoA binding site. Serine 221 contacts CoA. Residue histidine 264 is the Proton donor/acceptor of the active site. Residues lysine 269 and lysine 273 each coordinate CoA. (3S)-3-hydroxy-3-methylglutaryl-CoA is bound by residues lysine 273, asparagine 343, and serine 377. Position 273 is an N6-acetyllysine (lysine 273). The residue at position 476 (threonine 476) is a Phosphothreonine. The segment at histidine 492–histidine 520 is disordered. A phosphoserine mark is found at serine 495 and serine 516.

It belongs to the thiolase-like superfamily. HMG-CoA synthase family. Homodimer.

It localises to the cytoplasm. The catalysed reaction is acetoacetyl-CoA + acetyl-CoA + H2O = (3S)-3-hydroxy-3-methylglutaryl-CoA + CoA + H(+). Its pathway is metabolic intermediate biosynthesis; (R)-mevalonate biosynthesis; (R)-mevalonate from acetyl-CoA: step 2/3. In terms of biological role, catalyzes the condensation of acetyl-CoA with acetoacetyl-CoA to form HMG-CoA, which is converted by HMG-CoA reductase (HMGCR) into mevalonate, a precursor for cholesterol synthesis. The polypeptide is Hydroxymethylglutaryl-CoA synthase, cytoplasmic (Homo sapiens (Human)).